Reading from the N-terminus, the 277-residue chain is Sarcosine/dimethylglycine N-methyltransferase (277 aa).

It belongs to the methyltransferase superfamily. Monomer.

The enzyme catalyses sarcosine + 2 S-adenosyl-L-methionine = glycine betaine + 2 S-adenosyl-L-homocysteine + 2 H(+). The catalysed reaction is sarcosine + S-adenosyl-L-methionine = N,N-dimethylglycine + S-adenosyl-L-homocysteine + H(+). It carries out the reaction N,N-dimethylglycine + S-adenosyl-L-methionine = glycine betaine + S-adenosyl-L-homocysteine + H(+). It functions in the pathway amine and polyamine biosynthesis; betaine biosynthesis via glycine pathway; betaine from glycine: step 2/3. Its pathway is amine and polyamine biosynthesis; betaine biosynthesis via glycine pathway; betaine from glycine: step 3/3. Its activity is regulated as follows. Inhibited by n-butylic acid and S-adenosyl-L-homocysteine. Functionally, catalyzes the methylation of sarcosine and dimethylglycine to dimethylglycine and betaine, respectively, with S-adenosylmethionine (AdoMet) acting as the methyl donor. Activity with sarcosine is much weaker than activity with dimethylglycine. The sequence is that of Sarcosine/dimethylglycine N-methyltransferase from Aphanothece halophytica.